The chain runs to 61 residues: Large ribosomal subunit protein eL24 (61 aa).

Cys-7, Cys-10, Cys-33, and Cys-37 together coordinate Zn(2+). The C4-type zinc finger occupies 7–37 (CSFCGHEIPPGTGLMYVRNDGTMLWFCSSKC).

It belongs to the eukaryotic ribosomal protein eL24 family. Part of the 50S ribosomal subunit. Forms a cluster with proteins L3 and L14. Requires Zn(2+) as cofactor.

Functionally, binds to the 23S rRNA. The chain is Large ribosomal subunit protein eL24 from Saccharolobus islandicus (strain M.16.27) (Sulfolobus islandicus).